The sequence spans 492 residues: Bifunctional purine biosynthesis protein PurH (492 aa).

Positions 1 to 144 constitute an MGS-like domain; the sequence is MKKAILSVSN…KNYKHVTTIV (144 aa).

Belongs to the PurH family.

The enzyme catalyses (6R)-10-formyltetrahydrofolate + 5-amino-1-(5-phospho-beta-D-ribosyl)imidazole-4-carboxamide = 5-formamido-1-(5-phospho-D-ribosyl)imidazole-4-carboxamide + (6S)-5,6,7,8-tetrahydrofolate. It catalyses the reaction IMP + H2O = 5-formamido-1-(5-phospho-D-ribosyl)imidazole-4-carboxamide. Its pathway is purine metabolism; IMP biosynthesis via de novo pathway; 5-formamido-1-(5-phospho-D-ribosyl)imidazole-4-carboxamide from 5-amino-1-(5-phospho-D-ribosyl)imidazole-4-carboxamide (10-formyl THF route): step 1/1. The protein operates within purine metabolism; IMP biosynthesis via de novo pathway; IMP from 5-formamido-1-(5-phospho-D-ribosyl)imidazole-4-carboxamide: step 1/1. The protein is Bifunctional purine biosynthesis protein PurH of Staphylococcus aureus (strain USA300).